The sequence spans 75 residues: Exodeoxyribonuclease 7 small subunit (75 aa).

It belongs to the XseB family. As to quaternary structure, heterooligomer composed of large and small subunits.

The protein localises to the cytoplasm. The enzyme catalyses Exonucleolytic cleavage in either 5'- to 3'- or 3'- to 5'-direction to yield nucleoside 5'-phosphates.. In terms of biological role, bidirectionally degrades single-stranded DNA into large acid-insoluble oligonucleotides, which are then degraded further into small acid-soluble oligonucleotides. The protein is Exodeoxyribonuclease 7 small subunit of Nostoc punctiforme (strain ATCC 29133 / PCC 73102).